The chain runs to 782 residues: Probable methionine--tRNA ligase, cytoplasmic (782 aa).

The short motif at 231-241 is the 'HIGH' region element; sequence PYVNNVPHLGN. Residues 551–555 carry the 'KMSKS' region motif; the sequence is KFSKS.

This sequence belongs to the class-I aminoacyl-tRNA synthetase family.

It localises to the cytoplasm. The catalysed reaction is tRNA(Met) + L-methionine + ATP = L-methionyl-tRNA(Met) + AMP + diphosphate. The sequence is that of Probable methionine--tRNA ligase, cytoplasmic (rar1) from Schizosaccharomyces pombe (strain 972 / ATCC 24843) (Fission yeast).